A 561-amino-acid chain; its full sequence is Arginine--tRNA ligase (561 aa).

The short motif at 108–118 (PNVAKEMHVGH) is the 'HIGH' region element.

It belongs to the class-I aminoacyl-tRNA synthetase family. In terms of assembly, monomer.

Its subcellular location is the cytoplasm. It carries out the reaction tRNA(Arg) + L-arginine + ATP = L-arginyl-tRNA(Arg) + AMP + diphosphate. The protein is Arginine--tRNA ligase of Haemophilus ducreyi (strain 35000HP / ATCC 700724).